Consider the following 375-residue polypeptide: Solute carrier family 35 member F2 (375 aa).

Methionine 1 is modified (N-acetylmethionine). Residues serine 5, serine 22, serine 25, and serine 28 each carry the phosphoserine modification. A run of 10 helical transmembrane segments spans residues isoleucine 39–threonine 59, methionine 73–phenylalanine 93, tryptophan 108–valine 126, serine 136–leucine 156, phenylalanine 165–alanine 185, valine 195–cysteine 215, glutamate 227–valine 247, leucine 263–isoleucine 283, serine 290–phenylalanine 310, and phenylalanine 314–serine 334. Serine 372 is subject to Phosphoserine.

It belongs to the SLC35F solute transporter family.

It is found in the membrane. Putative solute transporter. This chain is Solute carrier family 35 member F2 (Slc35f2), found in Mus musculus (Mouse).